A 123-amino-acid chain; its full sequence is Amoebiasin-2 (123 aa).

Positions 1-16 are cleaved as a signal peptide; the sequence is MKQFIFFALLCTSTYA. The BC loop signature appears at 45–50; that stretch reads NPSTGY. Residues 71-81 carry the DE loop motif; sequence EPHPSGMVGFP. An FG loop motif is present at residues 105 to 114; it reads PWEKGKEPLR.

Belongs to the protease inhibitor I42 family. Monomer. May form homodimer. Interacts with cysteine protease CP2. Interacts with cysteine protease CP5.

Its subcellular location is the cytoplasmic vesicle. The protein resides in the lysosome. It is found in the phagosome. Cysteine protease inhibitor. Inhibits cysteine proteases CP1, CP2 and to a lesser extent CP5. The chain is Amoebiasin-2 from Entamoeba histolytica (strain ATCC 30459 / HM-1:IMSS / ABRM).